A 613-amino-acid polypeptide reads, in one-letter code: Ribosome-associated molecular chaperone SSB1 (613 aa).

Positions 1–391 (MAEGVFSGAI…ILTGSNLSDD (391 aa)) are nucleotide binding domain (NBD). ATP-binding positions include 16 to 18 (TTY), K73, 205 to 207 (GGT), 271 to 278 (ERAKRTLS), and G342. The tract at residues 392 to 402 (TKDLLLLDVAP) is inter-domain linker. Residues 403–613 (LSLGVAMQGD…RVVTKAMATR (211 aa)) form a substrate binding domain (SBD) region. Residues 516 to 612 (SEDIEKMVSQ…KRVVTKAMAT (97 aa)) are lid domain (SBDalpha). The Nuclear export signal signature appears at 574 to 582 (VEAALADAF).

Belongs to the heat shock protein 70 family. Ssb-type Hsp70 subfamily. As to quaternary structure, binds to ribosomes. Binds close to the ribosomal tunnel exit via contacts with both ribosomal proteins and rRNA. Directly interacts with nascent polypeptides. This interaction is dependent on the ribosome-associated complex (RAC). Interacts with SSE1. Interacts with FES1.

Its subcellular location is the cytoplasm. The enzyme catalyses ATP + H2O = ADP + phosphate + H(+). Functionally, ribosome-bound, Hsp70-type chaperone that assists in the cotranslational folding of newly synthesized proteins in the cytosol. Stimulates folding by interacting with nascent chains, binding to short, largely hydrophobic sequences exposed by unfolded proteins, thereby stabilizing longer, more slowly translated, and aggregation-prone nascent polypeptides and domains that cannot fold stably until fully synthesized. The Hsp70-protein substrate interaction depends on ATP-binding and on allosteric regulation between the NBD and the SBD. The ATP-bound state is characterized by a fast exchange rate of substrate (low affinity state), while in the ADP-bound state exchange is much slower (high affinity state). During the Hsp70 cycle, the chaperone switches between the ATP-bound state (open conformation) and the ADP-bound state (closed conformation) by major conformational rearrangements involving mainly the lid domain. Ssb cooperates with a specific Hsp40/Hsp70 co-chaperone termed the ribosome-associated complex (RAC), which stimulates the ATPase activity of the ribosome-associated pool of Ssbs and switches it to the high affinity substrate binding state. Hsp110 chaperone SSE1 and FES1 act as nucleotide exchange factors that cause substrate release. This chain is Ribosome-associated molecular chaperone SSB1 (SSB1), found in Eremothecium gossypii (strain ATCC 10895 / CBS 109.51 / FGSC 9923 / NRRL Y-1056) (Yeast).